The chain runs to 811 residues: Probable glutamine--tRNA ligase (811 aa).

The tract at residues 190–217 (DAAAGKKKGAKAKNSKQKTVDSGKAKEQ) is disordered. A compositionally biased stretch (basic residues) spans 194–205 (GKKKGAKAKNSK). Residues 207–217 (KTVDSGKAKEQ) show a composition bias toward basic and acidic residues. The 'HIGH' region motif lies at 269 to 279 (PEPNGYLHIGH). Residues 270–272 (EPN) and 276–282 (HIGHSKA) each bind ATP. Residues Asp-302 and Tyr-447 each coordinate L-glutamine. Residues Thr-466, 495–496 (RL), and 503–505 (MSK) contribute to the ATP site. The short motif at 502–506 (LMSKR) is the 'KMSKS' region element.

This sequence belongs to the class-I aminoacyl-tRNA synthetase family.

The protein resides in the cytoplasm. It carries out the reaction tRNA(Gln) + L-glutamine + ATP = L-glutaminyl-tRNA(Gln) + AMP + diphosphate. The chain is Probable glutamine--tRNA ligase (qrs1) from Schizosaccharomyces pombe (strain 972 / ATCC 24843) (Fission yeast).